Here is a 216-residue protein sequence, read N- to C-terminus: tRNA (guanine-N(7)-)-methyltransferase (216 aa).

Residues E44, E69, N97, and D119 each coordinate S-adenosyl-L-methionine. D119 is a catalytic residue. Substrate is bound by residues K123, D155, and 192–195; that span reads TEYE.

This sequence belongs to the class I-like SAM-binding methyltransferase superfamily. TrmB family.

The enzyme catalyses guanosine(46) in tRNA + S-adenosyl-L-methionine = N(7)-methylguanosine(46) in tRNA + S-adenosyl-L-homocysteine. It functions in the pathway tRNA modification; N(7)-methylguanine-tRNA biosynthesis. In terms of biological role, catalyzes the formation of N(7)-methylguanine at position 46 (m7G46) in tRNA. The sequence is that of tRNA (guanine-N(7)-)-methyltransferase from Lysinibacillus sphaericus (strain C3-41).